Consider the following 109-residue polypeptide: Probable gas vesicle protein J1 (109 aa).

Belongs to the gas vesicle GvpA family. As to quaternary structure, interacts with GvpA.

The protein localises to the gas vesicle. In terms of biological role, a minor component of the gas vesicle, might be involved in nucleating gas vesicle formation. Gas vesicles (GV) are hollow, gas filled proteinaceous nanostructures. It is not clear what function GVs perform in soil bacteria. This Streptomyces coelicolor (strain ATCC BAA-471 / A3(2) / M145) protein is Probable gas vesicle protein J1 (gvpJ1).